Reading from the N-terminus, the 170-residue chain is Dual-action ribosomal maturation protein DarP (170 aa).

The protein belongs to the DarP family.

It localises to the cytoplasm. Its function is as follows. Member of a network of 50S ribosomal subunit biogenesis factors which assembles along the 30S-50S interface, preventing incorrect 23S rRNA structures from forming. Promotes peptidyl transferase center (PTC) maturation. The chain is Dual-action ribosomal maturation protein DarP from Neisseria meningitidis serogroup A / serotype 4A (strain DSM 15465 / Z2491).